Here is a 71-residue protein sequence, read N- to C-terminus: Putative membrane protein insertion efficiency factor (71 aa).

Belongs to the UPF0161 family.

It localises to the cell membrane. Functionally, could be involved in insertion of integral membrane proteins into the membrane. The protein is Putative membrane protein insertion efficiency factor of Acetivibrio thermocellus (strain ATCC 27405 / DSM 1237 / JCM 9322 / NBRC 103400 / NCIMB 10682 / NRRL B-4536 / VPI 7372) (Clostridium thermocellum).